The sequence spans 198 residues: uncharacterized protein (198 aa).

The disordered stretch occupies residues 51–74; that stretch reads EEPDNGDDRGSRRTTGQGRKWAAH.

This is an uncharacterized protein from Homo sapiens (Human).